Consider the following 149-residue polypeptide: Calmodulin (149 aa).

The residue at position 2 (Ala2) is an N-acetylalanine. 4 consecutive EF-hand domains span residues Glu8–Asn43, Pro44–Asp79, Asp81–Lys116, and Leu117–Lys149. Ca(2+) contacts are provided by Asp21, Asp23, Asp25, Thr27, Glu32, Asp57, Asp59, Asn61, Thr63, Glu68, Asp94, Asp96, Asn98, Tyr100, Glu105, Asp130, Asp132, Asp134, Gln136, and Glu141.

It belongs to the calmodulin family.

Calmodulin mediates the control of a large number of enzymes, ion channels and other proteins by Ca(2+). Among the enzymes to be stimulated by the calmodulin-Ca(2+) complex are a number of protein kinases and phosphatases. This Blastocladiella emersonii (Aquatic fungus) protein is Calmodulin (CMD1).